The primary structure comprises 685 residues: Envelope glycoprotein (685 aa).

Positions 1-41 are cleaved as a signal peptide; it reads MVLLPGSMLLTSNLHHLRHQMSPGSWKRLIILLSCVFGGGG. At 42–632 the chain is on the extracellular side; sequence TSLQNKNPHQ…NNSPWFTTLL (591 aa). Cystine bridges form between cysteine 148-cysteine 169 and cysteine 161-cysteine 174. Residues 276-309 form a disordered region; it reads PPRTSLALPPPLPPREAPPPSLPDSNSTALATSA. Positions 283-297 are enriched in pro residues; the sequence is LPPPLPPREAPPPSL. A compositionally biased stretch (polar residues) spans 299–309; sequence DSNSTALATSA. Asparagine 301 and asparagine 344 each carry an N-linked (GlcNAc...) asparagine; by host glycan. 3 disulfides stabilise this stretch: cysteine 354–cysteine 357, cysteine 354–cysteine 584, and cysteine 576–cysteine 583. Residues 354-357 carry the CXXC motif; sequence CWLC. N-linked (GlcNAc...) asparagine; by host glycans are attached at residues asparagine 415, asparagine 421, asparagine 433, and asparagine 453. A fusion peptide region spans residues 492–512; it reads VSLTLAVLLGLGITAGIGTGS. Coiled-coil stretches lie at residues 520–570 and 580–616; these read IDLQ…LLFL and KEEC…KSQN. The segment at 559-575 is immunosuppression; it reads LQNRRGLDLLFLKEGGL. The CX6CC motif lies at 576 to 584; the sequence is CAALKEECC. The chain crosses the membrane as a helical span at residues 633-653; sequence STIAGPLLLLLLLLILGPCII. Cysteine 651 is lipidated: S-palmitoyl cysteine; by host. Residues 654–685 are Cytoplasmic-facing; sequence NKLVQFINDRISAVKILVLRQKYQALENEGNL. A YXXL motif; contains endocytosis signal motif is present at residues 676–679; sequence YQAL.

In terms of assembly, the mature envelope protein (Env) consists of a trimer of SU-TM heterodimers attached by a labile interchain disulfide bond. Specific enzymatic cleavages in vivo yield mature proteins. Envelope glycoproteins are synthesized as an inactive precursor that is N-glycosylated and processed likely by host cell furin or by a furin-like protease in the Golgi to yield the mature SU and TM proteins. The cleavage site between SU and TM requires the minimal sequence [KR]-X-[KR]-R. The R-peptide is released from the C-terminus of the cytoplasmic tail of the TM protein upon particle formation as a result of proteolytic cleavage by the viral protease. Cleavage of this peptide is required for TM to become fusogenic. Post-translationally, the CXXC motif is highly conserved across a broad range of retroviral envelope proteins. It is thought to participate in the formation of a labile disulfide bond possibly with the CX6CC motif present in the transmembrane protein. Isomerization of the intersubunit disulfide bond to an SU intrachain disulfide bond is thought to occur upon receptor recognition in order to allow membrane fusion. In terms of processing, the transmembrane protein is palmitoylated. The R-peptide is palmitoylated.

Its subcellular location is the virion membrane. The protein resides in the host cell membrane. In terms of biological role, the surface protein (SU) attaches the virus to the host cell by binding to its receptor. This interaction triggers the refolding of the transmembrane protein (TM) and is thought to activate its fusogenic potential by unmasking its fusion peptide. Fusion occurs at the host cell plasma membrane. The transmembrane protein (TM) acts as a class I viral fusion protein. Under the current model, the protein has at least 3 conformational states: pre-fusion native state, pre-hairpin intermediate state, and post-fusion hairpin state. During viral and target cell membrane fusion, the coiled coil regions (heptad repeats) assume a trimer-of-hairpins structure, positioning the fusion peptide in close proximity to the C-terminal region of the ectodomain. The formation of this structure appears to drive apposition and subsequent fusion of viral and target cell membranes. Membranes fusion leads to delivery of the nucleocapsid into the cytoplasm. The protein is Envelope glycoprotein (env) of Gibbon ape leukemia virus (GALV).